The primary structure comprises 362 residues: Phosphoserine aminotransferase (362 aa).

Ser9 and Arg42 together coordinate L-glutamate. Residues 76–77 (GR), Trp102, Thr153, Asp174, and Gln197 contribute to the pyridoxal 5'-phosphate site. Lys198 bears the N6-(pyridoxal phosphate)lysine mark. A pyridoxal 5'-phosphate-binding site is contributed by 239–240 (NT).

This sequence belongs to the class-V pyridoxal-phosphate-dependent aminotransferase family. SerC subfamily. As to quaternary structure, homodimer. Pyridoxal 5'-phosphate serves as cofactor.

Its subcellular location is the cytoplasm. It carries out the reaction O-phospho-L-serine + 2-oxoglutarate = 3-phosphooxypyruvate + L-glutamate. It catalyses the reaction 4-(phosphooxy)-L-threonine + 2-oxoglutarate = (R)-3-hydroxy-2-oxo-4-phosphooxybutanoate + L-glutamate. The protein operates within amino-acid biosynthesis; L-serine biosynthesis; L-serine from 3-phospho-D-glycerate: step 2/3. Its pathway is cofactor biosynthesis; pyridoxine 5'-phosphate biosynthesis; pyridoxine 5'-phosphate from D-erythrose 4-phosphate: step 3/5. In terms of biological role, catalyzes the reversible conversion of 3-phosphohydroxypyruvate to phosphoserine and of 3-hydroxy-2-oxo-4-phosphonooxybutanoate to phosphohydroxythreonine. This Escherichia coli O157:H7 protein is Phosphoserine aminotransferase.